A 474-amino-acid chain; its full sequence is Putative matrix metalloproteinase (474 aa).

The N-terminal stretch at 1–17 (MIIYFAVITCSLKLCRS) is a signal peptide. A Zn(2+)-binding site is contributed by H189. E190 is a catalytic residue. Zn(2+) contacts are provided by H193 and H199. The stretch at 299 to 344 (AGVYDAISYVRGDLYVFVGDLHWRFDTSGMLHNGYPQPTGATWRLP) is one Hemopexin repeat.

This sequence belongs to the peptidase M10A family. It depends on Zn(2+) as a cofactor.

The chain is Putative matrix metalloproteinase from Heliothis virescens ascovirus 3e (HvAV-3e).